The following is a 278-amino-acid chain: MDVRQGIHSEHAKALDTAGLRRHFLVENVFAPDALSLTYSHIDRIIVGGAWPATRPVEVPASLGAEMGVSHLLARRELGAINIGGPGWVEVDGQRHAVGTEEAIYIGQGGQGVVFGSDDHARPAKFYLNCAPAHTAYPTRTITLAQASPETLGDAATSNRRTIYKFIVPDVLPTCQLSMGMTKLEPGSLWNTMPCHTHERRMEVYFYFNLAADAAVFHLLGEPGETRHVVVHNEQAVISPSWSIHSGVGTQAYTFIWGMAGENQVFKDMDHIAVADLR.

Residues His196, His198, Glu203, and His245 each coordinate Zn(2+).

The protein belongs to the KduI family. Requires Zn(2+) as cofactor.

The enzyme catalyses 5-dehydro-4-deoxy-D-glucuronate = 3-deoxy-D-glycero-2,5-hexodiulosonate. It participates in glycan metabolism; pectin degradation; 2-dehydro-3-deoxy-D-gluconate from pectin: step 4/5. In terms of biological role, catalyzes the isomerization of 5-dehydro-4-deoxy-D-glucuronate to 3-deoxy-D-glycero-2,5-hexodiulosonate. This is 4-deoxy-L-threo-5-hexosulose-uronate ketol-isomerase from Burkholderia cenocepacia (strain ATCC BAA-245 / DSM 16553 / LMG 16656 / NCTC 13227 / J2315 / CF5610) (Burkholderia cepacia (strain J2315)).